The following is a 307-amino-acid chain: UDP-3-O-acyl-N-acetylglucosamine deacetylase (307 aa).

Residues His80, His239, and Asp243 each contribute to the Zn(2+) site. Catalysis depends on His266, which acts as the Proton donor.

It belongs to the LpxC family. Zn(2+) is required as a cofactor.

The catalysed reaction is a UDP-3-O-[(3R)-3-hydroxyacyl]-N-acetyl-alpha-D-glucosamine + H2O = a UDP-3-O-[(3R)-3-hydroxyacyl]-alpha-D-glucosamine + acetate. The protein operates within glycolipid biosynthesis; lipid IV(A) biosynthesis; lipid IV(A) from (3R)-3-hydroxytetradecanoyl-[acyl-carrier-protein] and UDP-N-acetyl-alpha-D-glucosamine: step 2/6. Functionally, catalyzes the hydrolysis of UDP-3-O-myristoyl-N-acetylglucosamine to form UDP-3-O-myristoylglucosamine and acetate, the committed step in lipid A biosynthesis. The chain is UDP-3-O-acyl-N-acetylglucosamine deacetylase from Neisseria gonorrhoeae (strain ATCC 700825 / FA 1090).